A 397-amino-acid chain; its full sequence is Argininosuccinate synthase (397 aa).

8-16 (AYSGGLDTS) lines the ATP pocket. Residues Y86 and S91 each contribute to the L-citrulline site. G116 lines the ATP pocket. Residues T118, N122, and D123 each contribute to the L-aspartate site. An L-citrulline-binding site is contributed by N122. L-citrulline is bound by residues R126, S175, S184, E260, and Y272.

Belongs to the argininosuccinate synthase family. Type 1 subfamily. As to quaternary structure, homotetramer.

Its subcellular location is the cytoplasm. The enzyme catalyses L-citrulline + L-aspartate + ATP = 2-(N(omega)-L-arginino)succinate + AMP + diphosphate + H(+). Its pathway is amino-acid biosynthesis; L-arginine biosynthesis; L-arginine from L-ornithine and carbamoyl phosphate: step 2/3. This Clostridium botulinum (strain ATCC 19397 / Type A) protein is Argininosuccinate synthase.